The following is a 410-amino-acid chain: LL-diaminopimelate aminotransferase (410 aa).

Residues tyrosine 15 and glycine 42 each coordinate substrate. Pyridoxal 5'-phosphate-binding positions include tyrosine 72, 108–109, tyrosine 132, asparagine 187, tyrosine 218, and 246–248; these read SK and SFS. Substrate is bound by residues lysine 109, tyrosine 132, and asparagine 187. Lysine 249 carries the post-translational modification N6-(pyridoxal phosphate)lysine. Pyridoxal 5'-phosphate contacts are provided by arginine 257 and asparagine 292. Substrate-binding residues include asparagine 292 and arginine 388.

It belongs to the class-I pyridoxal-phosphate-dependent aminotransferase family. LL-diaminopimelate aminotransferase subfamily. As to quaternary structure, homodimer. Pyridoxal 5'-phosphate serves as cofactor.

It carries out the reaction (2S,6S)-2,6-diaminopimelate + 2-oxoglutarate = (S)-2,3,4,5-tetrahydrodipicolinate + L-glutamate + H2O + H(+). It participates in amino-acid biosynthesis; L-lysine biosynthesis via DAP pathway; LL-2,6-diaminopimelate from (S)-tetrahydrodipicolinate (aminotransferase route): step 1/1. Its function is as follows. Involved in the synthesis of meso-diaminopimelate (m-DAP or DL-DAP), required for both lysine and peptidoglycan biosynthesis. Catalyzes the direct conversion of tetrahydrodipicolinate to LL-diaminopimelate. This chain is LL-diaminopimelate aminotransferase, found in Geobacter sulfurreducens (strain ATCC 51573 / DSM 12127 / PCA).